A 725-amino-acid polypeptide reads, in one-letter code: Exocyst complex component 8 (725 aa).

At serine 19 the chain carries Phosphoserine. Positions 137 to 159 (AGFFSTPGGASRDGSGPGEEGKQ) are disordered. Threonine 142 bears the Phosphothreonine mark. One can recognise a PH domain in the interval 182–282 (YLVYNGDLVE…WLEVLEDTKR (101 aa)). The segment at 285 to 328 (SEKRRREQEEAAAPRGPPQVTSKATNPFEDDEEEEPAVPEVEEE) is disordered. Acidic residues predominate over residues 312 to 328 (FEDDEEEEPAVPEVEEE).

It belongs to the EXO84 family. The exocyst complex is composed of EXOC1, EXOC2, EXOC3, EXOC4, EXOC5, EXOC6, EXOC7 and EXOC8. Interacts (via PH domain) with GTP-bound RALA and RALB. Interacts with SH3BP1; required for the localization of both SH3BP1 and the exocyst to the leading edge of migrating cells.

Its subcellular location is the cytoplasm. It is found in the perinuclear region. The protein localises to the cell projection. The protein resides in the growth cone. Functionally, component of the exocyst complex involved in the docking of exocytic vesicles with fusion sites on the plasma membrane. The polypeptide is Exocyst complex component 8 (EXOC8) (Homo sapiens (Human)).